The sequence spans 202 residues: FMN-dependent NADH:quinone oxidoreductase (202 aa).

FMN contacts are provided by residues S9, S15–S17, M95–F98, and T139–G142.

The protein belongs to the azoreductase type 1 family. Homodimer. FMN is required as a cofactor.

It carries out the reaction 2 a quinone + NADH + H(+) = 2 a 1,4-benzosemiquinone + NAD(+). The enzyme catalyses N,N-dimethyl-1,4-phenylenediamine + anthranilate + 2 NAD(+) = 2-(4-dimethylaminophenyl)diazenylbenzoate + 2 NADH + 2 H(+). Quinone reductase that provides resistance to thiol-specific stress caused by electrophilic quinones. In terms of biological role, also exhibits azoreductase activity. Catalyzes the reductive cleavage of the azo bond in aromatic azo compounds to the corresponding amines. This Pseudomonas savastanoi pv. phaseolicola (strain 1448A / Race 6) (Pseudomonas syringae pv. phaseolicola (strain 1448A / Race 6)) protein is FMN-dependent NADH:quinone oxidoreductase.